We begin with the raw amino-acid sequence, 151 residues long: Large ribosomal subunit protein bL9 (151 aa).

Belongs to the bacterial ribosomal protein bL9 family.

Functionally, binds to the 23S rRNA. This Mycolicibacterium gilvum (strain PYR-GCK) (Mycobacterium gilvum (strain PYR-GCK)) protein is Large ribosomal subunit protein bL9.